Here is a 557-residue protein sequence, read N- to C-terminus: MLRSDAVTKGIQRSPNRAMLRAVGFGDEDFGKPILGIANGYSTITPCNVGLNDLSRRAEEAARQAGGMPQMFGTITVSDGISMGTEGMKYSLVSREVIADAIETACNGQSMDGVLAVGGCDKNMPGAMLAMARMNIPAVFVYGGTIKPGKLGGCDLTVVSAFEAVGQLTSGNIDEDQLTAVEKNACPGAGSCGGMFTANTMSAAIETMGLSLPYSSTMAAEDEEKADNAARSAEVLLDAVKANIRPLDLLTNDAFENAISVIMAVGGSTNAVLHLLAIARTAGVSLSIDDFERIRQRVPVICDLKPSGRYVTVDLHNAGGIPQVMRLLLDAGLLHGDCRTVEGKSLREVLADVPSVPPADQDVIRPLSNPLYGKGHLAILKGNLASEGSVAKISGVKTPVLTGPARVFESEEDCLAAILDQRIKAGDVVVVRNEGPVGGPGMREMLAPTSAIVGQGLGDRVALITDGRFSGGTYGLVVGHVAPEAAVGGTIGLVQGGDSITVDADQLLLQLNVDEAELTRRRAAWSKPEPRYRTGILGKYARLVSSSSRGAVTDQPD.

[2Fe-2S] cluster is bound at residue cysteine 47. Aspartate 79 lines the Mg(2+) pocket. Cysteine 120 lines the [2Fe-2S] cluster pocket. Residues aspartate 121 and lysine 122 each contribute to the Mg(2+) site. Lysine 122 bears the N6-carboxylysine mark. A [2Fe-2S] cluster-binding site is contributed by cysteine 192. Residue glutamate 444 coordinates Mg(2+). The active-site Proton acceptor is serine 470.

The protein belongs to the IlvD/Edd family. In terms of assembly, homodimer. It depends on [2Fe-2S] cluster as a cofactor. Mg(2+) serves as cofactor.

The catalysed reaction is (2R)-2,3-dihydroxy-3-methylbutanoate = 3-methyl-2-oxobutanoate + H2O. It carries out the reaction (2R,3R)-2,3-dihydroxy-3-methylpentanoate = (S)-3-methyl-2-oxopentanoate + H2O. Its pathway is amino-acid biosynthesis; L-isoleucine biosynthesis; L-isoleucine from 2-oxobutanoate: step 3/4. The protein operates within amino-acid biosynthesis; L-valine biosynthesis; L-valine from pyruvate: step 3/4. Functions in the biosynthesis of branched-chain amino acids. Catalyzes the dehydration of (2R,3R)-2,3-dihydroxy-3-methylpentanoate (2,3-dihydroxy-3-methylvalerate) into 2-oxo-3-methylpentanoate (2-oxo-3-methylvalerate) and of (2R)-2,3-dihydroxy-3-methylbutanoate (2,3-dihydroxyisovalerate) into 2-oxo-3-methylbutanoate (2-oxoisovalerate), the penultimate precursor to L-isoleucine and L-valine, respectively. In Parasynechococcus marenigrum (strain WH8102), this protein is Dihydroxy-acid dehydratase.